The following is a 71-amino-acid chain: uncharacterized protein (71 aa).

The chain crosses the membrane as a helical span at residues 37 to 57; sequence IGVGVSDGVSAGVGVGVAMII.

Its subcellular location is the membrane. This is an uncharacterized protein from Dictyostelium discoideum (Social amoeba).